A 467-amino-acid polypeptide reads, in one-letter code: MIPITALKDKTVALFGLGGSGIATAKAIVAGGARIIAWDDNPDSVARAQSAGIATGDLRQADWSQFAVFVLSPGVPLTHPQPHWSVDLARAAGVEIIGDVELFVRERNHIAPDCPFIAITGTNGKSTTTALIAHIIKATGRDMQLGGNIGTAILTLEPPCADRFYVVECSSYQIDLAPSLNPTAGILLNLTPDHLDRHGSMENYAAIKERLVAASGTAIIGIDDAYCQAIADRLHGAGIRVVRISKEKHLDRGYFADGAKLLWAQDGEIDEIASLEGIGSLRGAHNAQNALAAIVACLSAGLSLEEIHAGLKSFPGLAHRMEQVGRRGKVLFVNDSKATNAEATAPALSSFPQNIYWIVGGVPKAGGINSLTAFFPRVAKAYLIGEAAAQFAATLGGAVPFEISDTLAAAVAHAAGDAGNDAAPEPVVLLSPACASFDQFQNFEKRGDAFRDAVLALPGVMPMRGES.

121–127 (GTNGKST) contacts ATP.

This sequence belongs to the MurCDEF family.

It localises to the cytoplasm. It carries out the reaction UDP-N-acetyl-alpha-D-muramoyl-L-alanine + D-glutamate + ATP = UDP-N-acetyl-alpha-D-muramoyl-L-alanyl-D-glutamate + ADP + phosphate + H(+). It functions in the pathway cell wall biogenesis; peptidoglycan biosynthesis. Functionally, cell wall formation. Catalyzes the addition of glutamate to the nucleotide precursor UDP-N-acetylmuramoyl-L-alanine (UMA). This is UDP-N-acetylmuramoylalanine--D-glutamate ligase from Brucella suis biovar 1 (strain 1330).